The chain runs to 485 residues: MTNKVRTRFAPSPTGYMHVGNLRTALYAYLIAKHDNGDFILRIEDTDQERLVEGALDVIYNTLKITGLSHDEGPDIGGPVGPYVQSERRNIYIEYAEKLIEKGEAYYCFCSKERLDMLRANSEALKRPFRYDKHCIDLSKEEIDKKIAEGVPYVIRQKNPTTGSTSFHDEIYGDISVDNSELDDMILIKSDGLPTYNFANVVDDHLMGITHVVRGSEYLSSSPKYNRLYEAFGWDVPIYVHCPPIMKDEHHKLSKRNGDASFEDLMAKGYLKEAILNYIALLGWNPGGEKEVFSMEELIEAFNYRNINKAPAVFDTKKLKWMNGEYIRALSLDKFHEMALPYYEEALTRDLDTKKISELLHTRVEVLNEIPEQLDFFNNLLEYSPKMYIHKKMKTTYENSLKSLEEVLPKLEALENWTFENIKEVCMNLVKELEVKNGVVLWPIRTAVSGKQFTPGGAFEIADILGKEETLERIKIGIDKLKALQ.

The short motif at 11–21 (PSPTGYMHVGN) is the 'HIGH' region element. Cys108, Cys110, Cys135, and Asp137 together coordinate Zn(2+). A 'KMSKS' region motif is present at residues 252–256 (KLSKR). Residue Lys255 coordinates ATP.

This sequence belongs to the class-I aminoacyl-tRNA synthetase family. Glutamate--tRNA ligase type 1 subfamily. As to quaternary structure, monomer. The cofactor is Zn(2+).

The protein localises to the cytoplasm. It catalyses the reaction tRNA(Glu) + L-glutamate + ATP = L-glutamyl-tRNA(Glu) + AMP + diphosphate. Functionally, catalyzes the attachment of glutamate to tRNA(Glu) in a two-step reaction: glutamate is first activated by ATP to form Glu-AMP and then transferred to the acceptor end of tRNA(Glu). The chain is Glutamate--tRNA ligase from Clostridium botulinum (strain Okra / Type B1).